The primary structure comprises 322 residues: Cytochrome c biogenesis protein CcsA (322 aa).

The next 8 helical transmembrane spans lie at 9–29, 44–64, 71–91, 98–118, 143–163, 226–246, 253–273, and 287–307; these read ILTH…LITL, GMIA…IYSG, LYES…VPYF, LTTI…SGLL, MILS…LLVI, VISL…VWAN, WSWD…AIYL, and AIVA…VNLL.

Belongs to the CcmF/CycK/Ccl1/NrfE/CcsA family. May interact with Ccs1.

The protein resides in the plastid. Its subcellular location is the chloroplast thylakoid membrane. In terms of biological role, required during biogenesis of c-type cytochromes (cytochrome c6 and cytochrome f) at the step of heme attachment. This is Cytochrome c biogenesis protein CcsA from Guizotia abyssinica (Niger).